The primary structure comprises 233 residues: Glucosamine-6-phosphate deaminase (233 aa).

Residue Asp62 is the Proton acceptor; for enolization step of the active site. The active-site For ring-opening step is Asn128. The active-site Proton acceptor; for ring-opening step is His130. The For ring-opening step role is filled by Glu135.

The protein belongs to the glucosamine/galactosamine-6-phosphate isomerase family. NagB subfamily.

It catalyses the reaction alpha-D-glucosamine 6-phosphate + H2O = beta-D-fructose 6-phosphate + NH4(+). The protein operates within amino-sugar metabolism; N-acetylneuraminate degradation; D-fructose 6-phosphate from N-acetylneuraminate: step 5/5. Catalyzes the reversible isomerization-deamination of glucosamine 6-phosphate (GlcN6P) to form fructose 6-phosphate (Fru6P) and ammonium ion. The polypeptide is Glucosamine-6-phosphate deaminase (Leuconostoc citreum (strain KM20)).